A 404-amino-acid polypeptide reads, in one-letter code: Cysteine desulfurase IscS (404 aa).

Pyridoxal 5'-phosphate-binding positions include 75 to 76 (AT), N155, Q183, and 203 to 205 (SAH). K206 carries the N6-(pyridoxal phosphate)lysine modification. Pyridoxal 5'-phosphate is bound at residue T243. C328 (cysteine persulfide intermediate) is an active-site residue. C328 contributes to the [2Fe-2S] cluster binding site.

Belongs to the class-V pyridoxal-phosphate-dependent aminotransferase family. NifS/IscS subfamily. Homodimer. Forms a heterotetramer with IscU, interacts with other sulfur acceptors. Requires pyridoxal 5'-phosphate as cofactor.

The protein localises to the cytoplasm. It catalyses the reaction (sulfur carrier)-H + L-cysteine = (sulfur carrier)-SH + L-alanine. The protein operates within cofactor biosynthesis; iron-sulfur cluster biosynthesis. Master enzyme that delivers sulfur to a number of partners involved in Fe-S cluster assembly, tRNA modification or cofactor biosynthesis. Catalyzes the removal of elemental sulfur atoms from cysteine to produce alanine. Functions as a sulfur delivery protein for Fe-S cluster synthesis onto IscU, an Fe-S scaffold assembly protein, as well as other S acceptor proteins. The polypeptide is Cysteine desulfurase IscS (Pseudomonas putida (strain GB-1)).